A 361-amino-acid polypeptide reads, in one-letter code: MKTRLGLVYGGKSAEHNVSLQTALAVTKALDTEKFDIHPIYITEKGEWVRGPQLTEPVSNVKMLQFEQTGQTFSPAVLNRDMFPGEADAKEDSIDVVFPLLHGPNGEDGTIQGMLELLNVPYVGNGVLASSAGMDKVVMKHLFAQAGLDQAKYVSFLKKTWSQSKEECYAQVEGELGYPCFVKPANLGSSVGISKCRSREELDQAFELAFQYDRKIVVEEGVIGREIELGVLGNDEPVCSVAGEIAPKKDFYDYKAKYEDGDTDLIIPASLTEDEYETMRSMAVKAFQAIDGSGLVRADFFLTNEGRVLINEVNTMPGFTPFSMFPLLWKQSGVEYAELIEKLVALAIERHEEKQQIKHTF.

The ATP-grasp domain maps to 140-345 (KHLFAQAGLD…YAELIEKLVA (206 aa)). 173–228 (EGELGYPCFVKPANLGSSVGISKCRSREELDQAFELAFQYDRKIVVEEGVIGREIE) contacts ATP. 3 residues coordinate Mg(2+): Asp-299, Glu-312, and Asn-314.

Belongs to the D-alanine--D-alanine ligase family. The cofactor is Mg(2+). Mn(2+) is required as a cofactor.

It localises to the cytoplasm. It catalyses the reaction 2 D-alanine + ATP = D-alanyl-D-alanine + ADP + phosphate + H(+). It participates in cell wall biogenesis; peptidoglycan biosynthesis. Functionally, cell wall formation. The polypeptide is D-alanine--D-alanine ligase (Bacillus licheniformis (strain ATCC 14580 / DSM 13 / JCM 2505 / CCUG 7422 / NBRC 12200 / NCIMB 9375 / NCTC 10341 / NRRL NRS-1264 / Gibson 46)).